Consider the following 297-residue polypeptide: Phosphatidylserine decarboxylase proenzyme (297 aa).

Residues Asp92, His149, and Ser254 each act as charge relay system; for autoendoproteolytic cleavage activity in the active site. The Schiff-base intermediate with substrate; via pyruvic acid; for decarboxylase activity role is filled by Ser254. Residue Ser254 is modified to Pyruvic acid (Ser); by autocatalysis.

Belongs to the phosphatidylserine decarboxylase family. PSD-B subfamily. Prokaryotic type I sub-subfamily. Heterodimer of a large membrane-associated beta subunit and a small pyruvoyl-containing alpha subunit. Pyruvate serves as cofactor. Is synthesized initially as an inactive proenzyme. Formation of the active enzyme involves a self-maturation process in which the active site pyruvoyl group is generated from an internal serine residue via an autocatalytic post-translational modification. Two non-identical subunits are generated from the proenzyme in this reaction, and the pyruvate is formed at the N-terminus of the alpha chain, which is derived from the carboxyl end of the proenzyme. The autoendoproteolytic cleavage occurs by a canonical serine protease mechanism, in which the side chain hydroxyl group of the serine supplies its oxygen atom to form the C-terminus of the beta chain, while the remainder of the serine residue undergoes an oxidative deamination to produce ammonia and the pyruvoyl prosthetic group on the alpha chain. During this reaction, the Ser that is part of the protease active site of the proenzyme becomes the pyruvoyl prosthetic group, which constitutes an essential element of the active site of the mature decarboxylase.

It localises to the cell membrane. It catalyses the reaction a 1,2-diacyl-sn-glycero-3-phospho-L-serine + H(+) = a 1,2-diacyl-sn-glycero-3-phosphoethanolamine + CO2. It participates in phospholipid metabolism; phosphatidylethanolamine biosynthesis; phosphatidylethanolamine from CDP-diacylglycerol: step 2/2. Functionally, catalyzes the formation of phosphatidylethanolamine (PtdEtn) from phosphatidylserine (PtdSer). This chain is Phosphatidylserine decarboxylase proenzyme, found in Bordetella parapertussis (strain 12822 / ATCC BAA-587 / NCTC 13253).